The chain runs to 183 residues: Adenine phosphoribosyltransferase (183 aa).

The protein belongs to the purine/pyrimidine phosphoribosyltransferase family. As to quaternary structure, homodimer.

It localises to the cytoplasm. The enzyme catalyses AMP + diphosphate = 5-phospho-alpha-D-ribose 1-diphosphate + adenine. The protein operates within purine metabolism; AMP biosynthesis via salvage pathway; AMP from adenine: step 1/1. Catalyzes a salvage reaction resulting in the formation of AMP, that is energically less costly than de novo synthesis. The chain is Adenine phosphoribosyltransferase from Edwardsiella ictaluri (strain 93-146).